A 443-amino-acid chain; its full sequence is Thymidine phosphorylase (443 aa).

This sequence belongs to the thymidine/pyrimidine-nucleoside phosphorylase family. In terms of assembly, homodimer.

It catalyses the reaction thymidine + phosphate = 2-deoxy-alpha-D-ribose 1-phosphate + thymine. It functions in the pathway pyrimidine metabolism; dTMP biosynthesis via salvage pathway; dTMP from thymine: step 1/2. Its function is as follows. The enzymes which catalyze the reversible phosphorolysis of pyrimidine nucleosides are involved in the degradation of these compounds and in their utilization as carbon and energy sources, or in the rescue of pyrimidine bases for nucleotide synthesis. The sequence is that of Thymidine phosphorylase from Shewanella baltica (strain OS223).